Here is a 442-residue protein sequence, read N- to C-terminus: Trigger factor (442 aa).

Positions 163–248 (NDLVTINYCI…ILNVEEKQEN (86 aa)) constitute a PPIase FKBP-type domain.

The protein belongs to the FKBP-type PPIase family. Tig subfamily.

It localises to the cytoplasm. It carries out the reaction [protein]-peptidylproline (omega=180) = [protein]-peptidylproline (omega=0). In terms of biological role, involved in protein export. Acts as a chaperone by maintaining the newly synthesized protein in an open conformation. Functions as a peptidyl-prolyl cis-trans isomerase. In Buchnera aphidicola subsp. Schizaphis graminum (strain Sg), this protein is Trigger factor.